The following is a 271-amino-acid chain: Protein PXR1 (271 aa).

2 disordered regions span residues methionine 1–serine 26 and lysine 149–alanine 233. A compositionally biased stretch (polar residues) spans arginine 17–serine 26. The G-patch domain occupies threonine 25 to lysine 71. Basic residues predominate over residues lysine 165–lysine 205. Residues glutamate 206–aspartate 230 show a composition bias toward basic and acidic residues.

The protein belongs to the PINX1 family.

Its subcellular location is the nucleus. The protein resides in the nucleolus. Functionally, involved in rRNA-processing at A0, A1 and A2 sites and negatively regulates telomerase. This chain is Protein PXR1 (PXR1), found in Kluyveromyces lactis (strain ATCC 8585 / CBS 2359 / DSM 70799 / NBRC 1267 / NRRL Y-1140 / WM37) (Yeast).